The primary structure comprises 663 residues: Methionine--tRNA ligase (663 aa).

Residues Ala10–His20 carry the 'HIGH' region motif. Residues Cys142, Cys145, Cys154, and Cys157 each contribute to the Zn(2+) site. The 'KMSKS' region motif lies at Lys323–Ser327. Thr326 lines the ATP pocket. Residues Tyr563–His663 form the tRNA-binding domain.

The protein belongs to the class-I aminoacyl-tRNA synthetase family. MetG type 1 subfamily. In terms of assembly, homodimer. Zn(2+) is required as a cofactor.

Its subcellular location is the cytoplasm. The enzyme catalyses tRNA(Met) + L-methionine + ATP = L-methionyl-tRNA(Met) + AMP + diphosphate. In terms of biological role, is required not only for elongation of protein synthesis but also for the initiation of all mRNA translation through initiator tRNA(fMet) aminoacylation. This is Methionine--tRNA ligase from Methanococcus vannielii (strain ATCC 35089 / DSM 1224 / JCM 13029 / OCM 148 / SB).